Reading from the N-terminus, the 304-residue chain is Lipoprotein signal peptidase (304 aa).

Helical transmembrane passes span 28–48, 86–106, and 112–132; these read IKIK…IVFV, PAVP…TFIF, and LIVL…DRSV. Active-site residues include Asp148 and Asp163. The helical transmembrane segment at 163–183 threads the bilayer; it reads DICIVTGFALIFLTFVVDIFL.

Belongs to the peptidase A8 family.

The protein localises to the cell membrane. It carries out the reaction Release of signal peptides from bacterial membrane prolipoproteins. Hydrolyzes -Xaa-Yaa-Zaa-|-(S,diacylglyceryl)Cys-, in which Xaa is hydrophobic (preferably Leu), and Yaa (Ala or Ser) and Zaa (Gly or Ala) have small, neutral side chains.. It functions in the pathway protein modification; lipoprotein biosynthesis (signal peptide cleavage). In terms of biological role, this protein specifically catalyzes the removal of signal peptides from prolipoproteins. In Mycoplasmoides gallisepticum (strain R(low / passage 15 / clone 2)) (Mycoplasma gallisepticum), this protein is Lipoprotein signal peptidase.